Consider the following 601-residue polypeptide: RNA polymerase II C-terminal domain phosphatase-like 5 (601 aa).

Residues 1–20 (MFVAKNLSPERESKRQKKEP) form a disordered region. Residues 8 to 20 (SPERESKRQKKEP) show a composition bias toward basic and acidic residues. FCP1 homology domains are found at residues 84–259 (LNMK…TDES) and 381–553 (LNEK…DESE).

In terms of tissue distribution, expressed in roots, seedlings, hypocotyls, cotyledons, leaves, siliques and flowers.

The protein localises to the nucleus. The enzyme catalyses O-phospho-L-seryl-[protein] + H2O = L-seryl-[protein] + phosphate. It carries out the reaction O-phospho-L-threonyl-[protein] + H2O = L-threonyl-[protein] + phosphate. In terms of biological role, mediates the dephosphorylation of 'Ser-2' of the heptad repeats YSPTSPS in the C-terminal domain of the largest RNA polymerase II subunit (RPB1). This promotes the activity of RNA polymerase II. Positively regulates abscisic acid (ABA) and drought responses, including the regulation of specific genes expression. The protein is RNA polymerase II C-terminal domain phosphatase-like 5 of Arabidopsis thaliana (Mouse-ear cress).